A 3365-amino-acid polypeptide reads, in one-letter code: Probable serine/threonine-protein kinase roco9 (3365 aa).

Disordered stretches follow at residues 1 to 177, 397 to 497, 944 to 985, 1044 to 1098, and 1261 to 1301; these read MTSI…KSSK, ESTE…QPPQ, PIKK…GFLS, IHQQ…NNKI, and QNNL…ISKG. The segment covering 8 to 27 has biased composition (basic and acidic residues); sequence FDKKSKRSNEDTGEKEETKK. Low complexity-rich tracts occupy residues 51–84, 100–116, 137–169, and 397–415; these read LQQL…SLNT, STNS…STRS, SQTS…TVKT, and ESTE…TLEP. Positions 243 to 437 constitute a Rho-GAP domain; it reads TPLYSLIKRQ…RLPQQSSDDN (195 aa). Positions 421–434 are enriched in polar residues; that stretch reads PLSTSTQRLPQQSS. 5 stretches are compositionally biased toward low complexity: residues 435–445, 457–489, 959–974, 1044–1096, and 1262–1301; these read DDNSNNDNNNK, NNDN…QPKQ, SSPL…IPSK, IHQQ…NNNN, and NNLN…ISKG. The region spanning 804-1484 is the Myotubularin phosphatase domain; it reads IWDIYSPLIE…DQIILWSSFF (681 aa). LRR repeat units lie at residues 1510-1526, 1527-1549, 1550-1572, 1576-1599, 1600-1622, 1624-1645, 1646-1668, 1670-1691, 1697-1720, 1722-1743, 1744-1770, 1772-1789, 1790-1812, 1814-1835, 1837-1861, and 1863-1887; these read SQKL…LSYF, STLT…IILL, SNLT…LLKL, KLKL…IYTL, STLT…ISKM, QLKC…LSLC, VGLE…FFKL, SLRM…KLDD, MNEI…MFEM, SLIH…LLDN, LVNL…LFKL, VLDL…HAML, PSLK…DFNL, LLSE…IGTK, LSLT…ALLK, and LKSL…DAIL. Basic and acidic residues predominate over residues 1932–1947; that stretch reads SKEREKEKEKEKEKEK. 4 disordered regions span residues 1932 to 1963, 2190 to 2389, 2507 to 2567, and 2674 to 2704; these read SKER…DKDK, NNNN…NNGS, APST…LQTP, and SNQQ…TSIN. 4 stretches are compositionally biased toward low complexity: residues 2190-2205, 2216-2389, 2522-2567, and 2676-2688; these read NNNN…NNNN, SINN…NNGS, NNTS…LQTP, and QQQQ…STQH. A Protein kinase domain is found at 3008–3269; sequence ELDPNPIGEG…KKLEEIELIL (262 aa). ATP contacts are provided by residues 3014–3022 and Lys3035; that span reads IGEGGTATV. The active-site Proton acceptor is Asp3132. A compositionally biased stretch (low complexity) spans 3311–3333; it reads QQQKQQQLQQQKQSPKQLQQQKP. Residues 3311 to 3365 form a disordered region; that stretch reads QQQKQQQLQQQKQSPKQLQQQKPLPTPPKQLSNNDSTPTKPLDDSSDSSSEDSNN. Residues 3354–3365 show a composition bias toward acidic residues; it reads DSSDSSSEDSNN.

Belongs to the protein kinase superfamily. TKL Ser/Thr protein kinase family. ROCO subfamily.

The catalysed reaction is L-seryl-[protein] + ATP = O-phospho-L-seryl-[protein] + ADP + H(+). It catalyses the reaction L-threonyl-[protein] + ATP = O-phospho-L-threonyl-[protein] + ADP + H(+). This chain is Probable serine/threonine-protein kinase roco9 (roco9), found in Dictyostelium discoideum (Social amoeba).